A 198-amino-acid chain; its full sequence is Virion infectivity factor (198 aa).

Residues 1–31 (MERTLQSVVGRRRGSSNRGRGKNSLISTPSY) form a disordered region. Over residues 10–21 (GRRRGSSNRGRG) the composition is skewed to basic residues.

It is found in the host cytoplasm. The protein localises to the virion. Its function is as follows. Determines virus infectivity. The sequence is that of Virion infectivity factor (vif) from Bovine immunodeficiency virus (strain R29) (BIV).